We begin with the raw amino-acid sequence, 94 residues long: MEGKGRVLVQLLMLACVLEVSLCQHWSYGWLPGGKRSVGEVEATFRMMDSGDAVLSIPMDSPMERLSPIHIVSEVDAEGLPLKEQRFPNRRGRD.

The first 23 residues, 1-23, serve as a signal peptide directing secretion; that stretch reads MEGKGRVLVQLLMLACVLEVSLC. Gln-24 bears the Pyrrolidone carboxylic acid mark. Gly-33 carries the glycine amide modification.

Belongs to the GnRH family.

The protein localises to the secreted. Its function is as follows. Stimulates the secretion of gonadotropins. The protein is Progonadoliberin-3 (gnrh3) of Carassius auratus (Goldfish).